We begin with the raw amino-acid sequence, 216 residues long: MOB kinase activator-like 1 homolog C (216 aa).

Zn(2+) contacts are provided by Cys-78, Cys-83, His-160, and His-165.

The protein belongs to the MOB1/phocein family.

This chain is MOB kinase activator-like 1 homolog C (mobC), found in Dictyostelium discoideum (Social amoeba).